The primary structure comprises 226 residues: 2-C-methyl-D-erythritol 4-phosphate cytidylyltransferase (226 aa).

The protein belongs to the IspD/TarI cytidylyltransferase family. IspD subfamily.

It catalyses the reaction 2-C-methyl-D-erythritol 4-phosphate + CTP + H(+) = 4-CDP-2-C-methyl-D-erythritol + diphosphate. It participates in isoprenoid biosynthesis; isopentenyl diphosphate biosynthesis via DXP pathway; isopentenyl diphosphate from 1-deoxy-D-xylulose 5-phosphate: step 2/6. Catalyzes the formation of 4-diphosphocytidyl-2-C-methyl-D-erythritol from CTP and 2-C-methyl-D-erythritol 4-phosphate (MEP). This is 2-C-methyl-D-erythritol 4-phosphate cytidylyltransferase from Bacillus thuringiensis (strain Al Hakam).